Here is a 277-residue protein sequence, read N- to C-terminus: Digeranylgeranylglyceryl phosphate synthase (277 aa).

Transmembrane regions (helical) follow at residues 16 to 36 (ILAGIVGILGSLVAYEGIPPV), 40 to 60 (ILIFLVVYFGCSAGNTINDYF), 93 to 113 (FIGLIIALLLGWSAFLFALGA), 129 to 149 (FIGNVTVALLTAATPIYGAVG), 153 to 173 (IDLAGYLAICAFLVNVSREIM), 199 to 218 (SGIIASIFGFLTIISSFLPV), 222 to 244 (IGLGYLPIIIVDIMIAKASIDVL), and 253 to 273 (GQKILKFATFIAVISFLLGAL).

This sequence belongs to the UbiA prenyltransferase family. DGGGP synthase subfamily. Mg(2+) is required as a cofactor.

It is found in the cell membrane. The enzyme catalyses sn-3-O-(geranylgeranyl)glycerol 1-phosphate + (2E,6E,10E)-geranylgeranyl diphosphate = 2,3-bis-O-(geranylgeranyl)-sn-glycerol 1-phosphate + diphosphate. It participates in membrane lipid metabolism; glycerophospholipid metabolism. In terms of biological role, prenyltransferase that catalyzes the transfer of the geranylgeranyl moiety of geranylgeranyl diphosphate (GGPP) to the C2 hydroxyl of (S)-3-O-geranylgeranylglyceryl phosphate (GGGP). This reaction is the second ether-bond-formation step in the biosynthesis of archaeal membrane lipids. This is Digeranylgeranylglyceryl phosphate synthase from Pyrococcus horikoshii (strain ATCC 700860 / DSM 12428 / JCM 9974 / NBRC 100139 / OT-3).